The sequence spans 145 residues: Large ribosomal subunit protein uL13 (145 aa).

The protein belongs to the universal ribosomal protein uL13 family. Part of the 50S ribosomal subunit.

In terms of biological role, this protein is one of the early assembly proteins of the 50S ribosomal subunit, although it is not seen to bind rRNA by itself. It is important during the early stages of 50S assembly. The sequence is that of Large ribosomal subunit protein uL13 from Staphylococcus epidermidis (strain ATCC 35984 / DSM 28319 / BCRC 17069 / CCUG 31568 / BM 3577 / RP62A).